The chain runs to 1477 residues: Neuralized-like protein 4 (1477 aa).

Disordered regions lie at residues 1 to 26 (MAEL…RKQP) and 168 to 196 (QPPP…RPDK). Residues 1–167 (MAELHPRTGK…KCTQITVLSC (167 aa)) form the NHR 1 domain. Residues 171–183 (PEEEEEEDAEEQE) show a composition bias toward acidic residues. 4 consecutive NHR domains span residues 250–417 (ALLF…IVHN), 450–616 (QLLF…IMDE), 645–813 (DLRF…LTGG), and 841–1010 (SHRF…TVSS). The interval 1012–1041 (LLEEPDATKPPSITSESEEEEDPADHGDPH) is disordered. The 164-residue stretch at 1048–1211 (SLQFLANHGK…QCEQVSIVTG (164 aa)) folds into the NHR 6 domain.

Post-translationally, ubiquitinated. This ubiquitination leads to proteasomal degradation.

It localises to the cytoplasm. The protein localises to the cytoskeleton. The protein resides in the microtubule organizing center. It is found in the centrosome. Its subcellular location is the centriole. Functionally, promotes CCP110 ubiquitination and proteasome-dependent degradation. By counteracting accumulation of CP110, maintains normal centriolar homeostasis and preventing formation of ectopic microtubular organizing centers. This Xenopus tropicalis (Western clawed frog) protein is Neuralized-like protein 4 (neurl4).